Here is a 24-residue protein sequence, read N- to C-terminus: Major pollen allergen Ole e 4 (24 aa).

It belongs to the glycosyl hydrolase 17 family. In terms of processing, the N-terminus is blocked.

The protein is Major pollen allergen Ole e 4 of Olea europaea (Common olive).